Reading from the N-terminus, the 134-residue chain is Histone H2A (134 aa).

A compositionally biased stretch (gly residues) spans 1 to 10 (MTGGKSGGKA). The tract at residues 1 to 24 (MTGGKSGGKASGSKNAQSRSSKAG) is disordered. Residues Lys5 and Lys9 each carry the N6-acetyllysine modification. The residue at position 106 (Gln106) is an N5-methylglutamine. Residues 115 to 134 (QNLLPKKTPKSGKGPGSQEL) form a disordered region. At Ser131 the chain carries Phosphoserine. Positions 131 to 132 (SQ) match the [ST]-Q motif motif.

The protein belongs to the histone H2A family. In terms of assembly, the nucleosome is a histone octamer containing two molecules each of H2A, H2B, H3 and H4 assembled in one H3-H4 heterotetramer and two H2A-H2B heterodimers. The octamer wraps approximately 147 bp of DNA. Post-translationally, phosphorylated to form H2AS128ph (gamma-H2A) in response to DNA double-strand breaks (DSBs) generated by exogenous genotoxic agents and by stalled replication forks. Phosphorylation is dependent on the DNA damage checkpoint kinases mec1/ATR and tel1/ATM, spreads on either side of a detected DSB site and may mark the surrounding chromatin for recruitment of proteins required for DNA damage signaling and repair. Gamma-H2A is removed from the DNA prior to the strand invasion-primer extension step of the repair process and subsequently dephosphorylated. Dephosphorylation is necessary for efficient recovery from the DNA damage checkpoint. Acetylated by esa1 to form H2AK4ac and H2AK7ac.

Its subcellular location is the nucleus. The protein localises to the chromosome. In terms of biological role, core component of nucleosome which plays a central role in DNA double strand break (DSB) repair. Nucleosomes wrap and compact DNA into chromatin, limiting DNA accessibility to the cellular machineries which require DNA as a template. Histones thereby play a central role in transcription regulation, DNA repair, DNA replication and chromosomal stability. DNA accessibility is regulated via a complex set of post-translational modifications of histones, also called histone code, and nucleosome remodeling. The polypeptide is Histone H2A (httA) (Aspergillus niger (strain ATCC MYA-4892 / CBS 513.88 / FGSC A1513)).